The sequence spans 1456 residues: Sterol 3-beta-glucosyltransferase (1456 aa).

A compositionally biased stretch (acidic residues) spans 60–70; the sequence is ESDEEDGDEVE. 2 disordered regions span residues 60–113 and 128–156; these read ESDE…SISH and LSPH…TQSE. Residues 71-104 are compositionally biased toward low complexity; sequence TPSTTTTAVSPSATMSAPSPTATAPTPHSGTHTP. The span at 137–146 shows a compositional bias: basic and acidic residues; that stretch reads SSHEASRRGS. In terms of domain architecture, GRAM 1 spans 200–247; sequence QKLKGFAALDVDEQLIADYPVWLLKNVLIQGHLYITAKHMCFLSYLPR. The region spanning 251–351 is the PH domain; the sequence is ANIRSGTLVK…WVKALQKEIF (101 aa). Disordered regions lie at residues 462–512 and 524–776; these read HSAH…PRLP and DKCD…QDTF. Over residues 496–508 the composition is skewed to basic and acidic residues; sequence QPHERDEKRDSKL. The span at 556 to 567 shows a compositional bias: polar residues; it reads LASQRTSSSTLF. Low complexity-rich tracts occupy residues 576 to 606 and 647 to 676; these read SQPT…PASA and GGAT…SSPG. Gly residues predominate over residues 677–696; the sequence is TPGGLGGPGAVGAGGPGVMG. A compositionally biased stretch (low complexity) spans 719–735; that stretch reads APHDPAAAAAAADAAAP. Residues 827-893 form the GRAM 2 domain; the sequence is ERFQKRFALG…KVVENATKDS (67 aa). Positions 1004, 1005, 1007, 1279, 1307, 1310, 1323, 1326, 1327, 1328, 1347, and 1348 each coordinate UDP-alpha-D-glucose.

It belongs to the glycosyltransferase 28 family.

The protein localises to the cytoplasm. Its subcellular location is the membrane. It carries out the reaction a sterol + UDP-alpha-D-glucose = a sterol 3-beta-D-glucoside + UDP + H(+). The enzyme catalyses ergosterol + UDP-alpha-D-glucose = ergosteryl 3-beta-D-glucoside + UDP + H(+). Sterol glycosyltransferase responsible for the glycosylation of ergosterol to form ergosterol-glucoside. In Yarrowia lipolytica (strain CLIB 122 / E 150) (Yeast), this protein is Sterol 3-beta-glucosyltransferase.